Consider the following 468-residue polypeptide: RuvB-like helicase 2 (468 aa).

An ATP-binding site is contributed by 76 to 83 (GPPSTGKT).

Belongs to the RuvB family. May form heterododecamers with RVB1. Component of the SWR1 chromatin remodeling complex, the INO80 chromatin remodeling complex, and of the R2TP complex.

Its subcellular location is the nucleus. The enzyme catalyses ATP + H2O = ADP + phosphate + H(+). Functionally, DNA helicase which participates in several chromatin remodeling complexes, including the SWR1 and the INO80 complexes. The SWR1 complex mediates the ATP-dependent exchange of histone H2A for the H2A variant HZT1 leading to transcriptional regulation of selected genes by chromatin remodeling. The INO80 complex remodels chromatin by shifting nucleosomes and is involved in DNA repair. Also involved in pre-rRNA processing. This Emericella nidulans (strain FGSC A4 / ATCC 38163 / CBS 112.46 / NRRL 194 / M139) (Aspergillus nidulans) protein is RuvB-like helicase 2 (rvb2).